Reading from the N-terminus, the 885-residue chain is Leucine--tRNA ligase (885 aa).

The 'HIGH' region motif lies at 46–56 (PYPSGALHMGH). Residues 638-642 (KMSKS) carry the 'KMSKS' region motif. ATP is bound at residue Lys-641.

It belongs to the class-I aminoacyl-tRNA synthetase family.

It localises to the cytoplasm. It catalyses the reaction tRNA(Leu) + L-leucine + ATP = L-leucyl-tRNA(Leu) + AMP + diphosphate. This chain is Leucine--tRNA ligase, found in Xanthomonas campestris pv. campestris (strain B100).